We begin with the raw amino-acid sequence, 359 residues long: Cell division protein ZipA (359 aa).

The Periplasmic portion of the chain corresponds to 1 to 4; that stretch reads MDLN. A helical transmembrane segment spans residues 5 to 25; it reads TILIILGILALVALVAHGLWS. The Cytoplasmic segment spans residues 26–359; it reads NRREKSQYFE…AEEEYLAKIK (334 aa). Positions 78–101 are disordered; it reads PPVQQPLNTEPEPITQETPVRAEP.

This sequence belongs to the ZipA family. As to quaternary structure, interacts with FtsZ via their C-terminal domains.

The protein localises to the cell inner membrane. Essential cell division protein that stabilizes the FtsZ protofilaments by cross-linking them and that serves as a cytoplasmic membrane anchor for the Z ring. Also required for the recruitment to the septal ring of downstream cell division proteins. This is Cell division protein ZipA from Mannheimia succiniciproducens (strain KCTC 0769BP / MBEL55E).